The sequence spans 513 residues: MQLNPSEISELIKSRIQGLEASADVRNQGTVISVTDGIVRIHGLSDVMQGEMLEFPGNTFGLALNLERDSVGAVILGEYEHISEGDIVKTTGRILEVPVGPELVGRVVDALGNPIDGKGPVNAKLTDAIEKIAPGVIWRKSVSQPVQTGLKSIDSMVPIGRGQRELIIGDRQCGKTAVAIDTIINQKGKDLICIYVAIGQKASSIMNVVRKLEETGALEYTIVVAASASESAAMQYLAPYAGCTMGEYFRDRGQDALIIYDDLTKQAWAYRQISLLLRRPPGREAYPGDVFYLHSRLLERAARVSEEYVEKFTNGEVKGKSGSLTALPVIETQAGDVTAFVPTNVISITDGQIFLETDLFNAGIRPAINAGVSVSRVGGAAQTKVVKKLSGGIRTDLAQYRELAAFAQFASDLDEATRKQLERGRRVTELLKQPQYQPLQVWELAVSLFSANNGYLDDLDVKDVLPFEKGLREYLKTSHADLIKRIEDTKDLSKDDESALHAALKDFKKSGAY.

169 to 176 contributes to the ATP binding site; that stretch reads GDRQCGKT.

This sequence belongs to the ATPase alpha/beta chains family. In terms of assembly, F-type ATPases have 2 components, CF(1) - the catalytic core - and CF(0) - the membrane proton channel. CF(1) has five subunits: alpha(3), beta(3), gamma(1), delta(1), epsilon(1). CF(0) has three main subunits: a(1), b(2) and c(9-12). The alpha and beta chains form an alternating ring which encloses part of the gamma chain. CF(1) is attached to CF(0) by a central stalk formed by the gamma and epsilon chains, while a peripheral stalk is formed by the delta and b chains.

Its subcellular location is the cell inner membrane. It carries out the reaction ATP + H2O + 4 H(+)(in) = ADP + phosphate + 5 H(+)(out). Its function is as follows. Produces ATP from ADP in the presence of a proton gradient across the membrane. The alpha chain is a regulatory subunit. The protein is ATP synthase subunit alpha 1 of Burkholderia pseudomallei (strain 1710b).